Consider the following 116-residue polypeptide: Large ribosomal subunit protein bL20 (116 aa).

Belongs to the bacterial ribosomal protein bL20 family.

Binds directly to 23S ribosomal RNA and is necessary for the in vitro assembly process of the 50S ribosomal subunit. It is not involved in the protein synthesizing functions of that subunit. The chain is Large ribosomal subunit protein bL20 from Picosynechococcus sp. (strain ATCC 27264 / PCC 7002 / PR-6) (Agmenellum quadruplicatum).